A 132-amino-acid polypeptide reads, in one-letter code: Small ribosomal subunit protein uS8c (132 aa).

Belongs to the universal ribosomal protein uS8 family. As to quaternary structure, part of the 30S ribosomal subunit.

It localises to the plastid. Its subcellular location is the chloroplast. Its function is as follows. One of the primary rRNA binding proteins, it binds directly to 16S rRNA central domain where it helps coordinate assembly of the platform of the 30S subunit. The protein is Small ribosomal subunit protein uS8c (rps8) of Rhodomonas salina (Cryptomonas salina).